The sequence spans 400 residues: F-box/kelch-repeat protein At4g19870 (400 aa).

The segment covering Met-1–Lys-10 has biased composition (basic and acidic residues). The segment at Met-1 to Leu-33 is disordered. Positions Ser-19–Leu-33 are enriched in low complexity. Positions Ser-27–Arg-73 constitute an F-box domain. Kelch repeat units lie at residues Glu-146–Gly-192, Ile-194–Glu-240, and Glu-242–Tyr-284.

In Arabidopsis thaliana (Mouse-ear cress), this protein is F-box/kelch-repeat protein At4g19870.